We begin with the raw amino-acid sequence, 447 residues long: N-succinylarginine dihydrolase (447 aa).

Residues 19–28 (AGLSFGNEAS), asparagine 110, and 137–138 (HR) contribute to the substrate site. Glutamate 174 is a catalytic residue. Arginine 212 is a binding site for substrate. Residue histidine 248 is part of the active site. Residues aspartate 250 and asparagine 359 each contribute to the substrate site. Residue cysteine 365 is the Nucleophile of the active site.

The protein belongs to the succinylarginine dihydrolase family. In terms of assembly, homodimer.

It catalyses the reaction N(2)-succinyl-L-arginine + 2 H2O + 2 H(+) = N(2)-succinyl-L-ornithine + 2 NH4(+) + CO2. It functions in the pathway amino-acid degradation; L-arginine degradation via AST pathway; L-glutamate and succinate from L-arginine: step 2/5. Functionally, catalyzes the hydrolysis of N(2)-succinylarginine into N(2)-succinylornithine, ammonia and CO(2). The chain is N-succinylarginine dihydrolase from Salmonella dublin (strain CT_02021853).